Reading from the N-terminus, the 322-residue chain is Elongation factor P--(R)-beta-lysine ligase (322 aa).

Ser75–Glu77 provides a ligand contact to substrate. Residue Arg99–Glu101 coordinates ATP. Tyr117 lines the substrate pocket. Position 241-242 (Glu241–Leu242) interacts with ATP. Glu248 contributes to the substrate binding site. Gly297 is an ATP binding site.

Belongs to the class-II aminoacyl-tRNA synthetase family. EpmA subfamily. As to quaternary structure, homodimer.

It carries out the reaction D-beta-lysine + L-lysyl-[protein] + ATP = N(6)-((3R)-3,6-diaminohexanoyl)-L-lysyl-[protein] + AMP + diphosphate + H(+). In terms of biological role, with EpmB is involved in the beta-lysylation step of the post-translational modification of translation elongation factor P (EF-P). Catalyzes the ATP-dependent activation of (R)-beta-lysine produced by EpmB, forming a lysyl-adenylate, from which the beta-lysyl moiety is then transferred to the epsilon-amino group of a conserved specific lysine residue in EF-P. The chain is Elongation factor P--(R)-beta-lysine ligase from Avibacterium paragallinarum (Haemophilus gallinarum).